We begin with the raw amino-acid sequence, 727 residues long: YTH domain-containing protein 1 (727 aa).

Residues 1 to 12 (MAADSREEKDGE) are compositionally biased toward basic and acidic residues. Residues 1-338 (MAADSREEKD…KHEKLSSSVR (338 aa)) are disordered. Ser-35 bears the Phosphoserine mark. Residues 50 to 59 (DRMESTDTKR) are compositionally biased toward basic and acidic residues. Positions 63 to 90 (SVHSRQLVSKPLSSSVSNNKRIVSTKGK) are enriched in polar residues. Over residues 91 to 115 (SATEYKNEEYQRSERNKRLDADRKI) the composition is skewed to basic and acidic residues. A Glycyl lysine isopeptide (Lys-Gly) (interchain with G-Cter in SUMO2) cross-link involves residue Lys-96. A phosphoserine mark is found at Ser-118 and Ser-120. Basic and acidic residues predominate over residues 124 to 144 (EPYKNQPEKTCVRKRDPERRA). Ser-146 is modified (phosphoserine). Thr-148 carries the post-translational modification Phosphothreonine. Composition is skewed to basic and acidic residues over residues 151 to 163 (GSER…DRRA) and 170 to 185 (SKEE…DHET). Acidic residues predominate over residues 199-254 (ENEEEGVEEDVEEDEEVEEDAEEDEEVDEDGEEEEEEEEEEEEEEEEEEEEYEQDE). Basic and acidic residues predominate over residues 255–270 (RDQKEEGNDYDTRSEA). Positions 280 to 289 (FTDGSVRSGS) are enriched in polar residues. Phosphoserine is present on residues Ser-308, Ser-315, Ser-317, Ser-318, and Ser-320. Residues 315-325 (SGSSASESYAG) show a composition bias toward low complexity. The YTH domain maps to 355-492 (ARFFLIKSNN…ECGTQLCLLF (138 aa)). RNA is bound by residues 361–363 (KSN) and 377–378 (WS). Position 424 is a phosphoserine (Ser-424). Residue Trp-428 participates in RNA binding. At Ser-435 the chain carries Phosphoserine. Asp-476 lines the RNA pocket. Over residues 508–523 (RHKRRMHSQPRSRGRP) the composition is skewed to basic residues. 3 disordered regions span residues 508–564 (RHKR…PGYL), 607–643 (GMPP…HPVP), and 669–727 (AVVS…RYRR). Basic and acidic residues predominate over residues 524 to 564 (SRREPVRDVGRRRPEDYDIHNSRKKPRIDYPPEFHQRPGYL). Ser-545 carries the phosphoserine modification. Positions 679–727 (RERDRERERDRPRDNRRDRERDRGRDRERERERLCDRDRDRGERGRYRR) are enriched in basic and acidic residues.

As to quaternary structure, interacts with SRSF1. Interacts with SRSF2. Interacts with SRSF3. Interacts with SRSF7. Interacts with SRSF10. Interacts with CPSF6. Interacts with KHDRBS1/SAM68. Interacts with TRA2B. Interacts with KHDRBS3. Interacts with EMD. Interacts with RBMX. Interacts with ZCCHC8. Tyrosine phosphorylated.

It localises to the nucleus. The protein resides in the nucleus speckle. In terms of biological role, regulator of alternative splicing that specifically recognizes and binds N6-methyladenosine (m6A)-containing RNAs. M6A is a modification present at internal sites of mRNAs and some non-coding RNAs and plays a role in the efficiency of mRNA splicing, processing and stability. Acts as a key regulator of exon-inclusion or exon-skipping during alternative splicing via interaction with mRNA splicing factors SRSF3 and SRSF10. Specifically binds m6A-containing mRNAs and promotes recruitment of SRSF3 to its mRNA-binding elements adjacent to m6A sites, leading to exon-inclusion during alternative splicing. In contrast, interaction with SRSF3 prevents interaction with SRSF10, a splicing factor that promotes exon skipping: this prevents SRSF10 from binding to its mRNA-binding sites close to m6A-containing regions, leading to inhibit exon skipping during alternative splicing. May also regulate alternative splice site selection. Also involved in nuclear export of m6A-containing mRNAs via interaction with SRSF3: interaction with SRSF3 facilitates m6A-containing mRNA-binding to both SRSF3 and NXF1, promoting mRNA nuclear export. Involved in S-adenosyl-L-methionine homeostasis by regulating expression of MAT2A transcripts, probably by binding m6A-containing MAT2A mRNAs. Also recognizes and binds m6A on other RNA molecules. Involved in random X inactivation mediated by Xist RNA: recognizes and binds m6A-containing Xist and promotes transcription repression activity of Xist. Also recognizes and binds m6A-containing single-stranded DNA. Involved in germline development: required for spermatogonial development in males and oocyte growth and maturation in females, probably via its role in alternative splicing. This Homo sapiens (Human) protein is YTH domain-containing protein 1.